The chain runs to 400 residues: MKLEVFVPRAAHGDKMGSDLEGAGSSDVPSPLSAAGDDSLGSDGDCAANSPAAGSGAGDLEGGGGERNSSGGPSAQDGPEATDDSRTQASAAGPCAGGVGGGEGARSKPYTRRPKPPYSYIALIAMAIRDSAGGRLTLAEINEYLMGKFPFFRGSYTGWRNSVRHNLSLNDCFVKVLRDPSRPWGKDNYWMLNPNSEYTFADGVFRRRRKRLSHRTTVSASGLRPEEAPPGPAGTPQPAPAARSSPIARSPARQEERSSPASKFSSSFAIDSILSKPFRSRRDGDSALGVQLPWGAAPCPPLRAYPALLPAAPGGALLPLCAYGASEPTLLASRGTEVQPAAPLLLAPLSTAAPAKPFRGPETAGAAHLYCPLRLPTALQAAAACGPGPHLSYPVETLLA.

The disordered stretch occupies residues Met-1 to Arg-112. Positions Leu-32–Gly-54 are enriched in low complexity. Gly residues-rich tracts occupy residues Ser-55 to Glu-66 and Cys-95 to Gly-104. A DNA-binding region (fork-head) is located at residues Lys-115–Lys-210. Positions Ser-213–Phe-264 are disordered. The segment covering Ala-228–Ala-239 has biased composition (pro residues). Low complexity predominate over residues Pro-240–Pro-251.

Expressed in kidney and stomach. Expression in the outer medulla of the kidney and the transitional epithelium. Expressed in the hair follicle medulla.

The protein resides in the nucleus. In terms of biological role, plays a role in hair follicle differentiation. The polypeptide is Forkhead box protein Q1 (Foxq1) (Mus musculus (Mouse)).